Here is a 282-residue protein sequence, read N- to C-terminus: MSDFSMETLKSLRQRTGVGLTKCKEALEHAKGNLEDAVVYLRKLGLASAGKKEHRETKEGVIAASVDEHGAAIVEVNVETDFVANNSVFRTFVTGLLSDILNNKLSDVDALAQVTSSQEPSLSVEELKAVTMQTVGENIRISRALYTPVNSNQSVGIYSHGNGKAVALVFLSGSDKQEALAKDIAMHIVASQPQFLSKESVPQEVLEREREVFSSQLSGKPQEVIEKITTGKFKAFFQETCLLEQAFIKDPDVTIQELVDRAAKASGEPLKVEHFVFWKIGA.

The segment at 80–83 is involved in Mg(2+) ion dislocation from EF-Tu; that stretch reads TDFV.

This sequence belongs to the EF-Ts family.

It localises to the cytoplasm. In terms of biological role, associates with the EF-Tu.GDP complex and induces the exchange of GDP to GTP. It remains bound to the aminoacyl-tRNA.EF-Tu.GTP complex up to the GTP hydrolysis stage on the ribosome. This is Elongation factor Ts (tsf) from Chlamydia muridarum (strain MoPn / Nigg).